A 1128-amino-acid polypeptide reads, in one-letter code: Major DNA-binding protein (1128 aa).

The tract at residues 1104–1128 (LGGGGQGSGGRRKRRLATVLPGLEV) is required for nuclear localization.

Belongs to the herpesviridae major DNA-binding protein family. Homooligomers. Forms double-helical filaments necessary for the formation of replication compartments within the host nucleus. Interacts with the origin-binding protein. Interacts with the helicase primase complex; this interaction stimulates primer synthesis activity of the helicase-primase complex. Interacts with the DNA polymerase. Interacts with the alkaline exonuclease; this interaction increases its nuclease processivity.

It localises to the virion tegument. The protein resides in the host nucleus. Its function is as follows. Plays several crucial roles in viral infection. Participates in the opening of the viral DNA origin to initiate replication by interacting with the origin-binding protein. May disrupt loops, hairpins and other secondary structures present on ssDNA to reduce and eliminate pausing of viral DNA polymerase at specific sites during elongation. Promotes viral DNA recombination by performing strand-transfer, characterized by the ability to transfer a DNA strand from a linear duplex to a complementary single-stranded DNA circle. Can also catalyze the renaturation of complementary single strands. Additionally, reorganizes the host cell nucleus, leading to the formation of prereplicative sites and replication compartments. This process is driven by the protein which can form double-helical filaments in the absence of DNA. The polypeptide is Major DNA-binding protein (Epstein-Barr virus (strain GD1) (HHV-4)).